Reading from the N-terminus, the 414-residue chain is MEKLVIVGAQWGDEGKGKIVDLLSKDYETAVRYQGGNNAGHTVIVEGKKYILHLVPTSILHKHTKGIIAQGMVIDLEVLSKEIKDLEVLDIENRLFISDRAHIILPYHKILDRLFEKKSNIGTTLKGIGPTYMMKYARKGIRMVDLKDEDIFFNRLEENLEFTKELCEKVYNERFELNKDEVAEDIFRLFKPIEKNIKNTFKIIQTSKSVIFEGAQGVMLDIDIGTYPYVTSSNSSTLGLSNGTGLHPKYFTDAKFVGVSKAYTTRVGAGPFPTELKDEIGDALRDFGHEYGSTTGRPRRCGWLDLVALKYACDTNGFDEIILTKLDVLDIFDEIKVCIAYENFEDFPSSLKDMENARPIYKTLKGWKATTKAARDKSKLPKEALDYIMFIEDYLNTKVSMLSTGPAREDYLYL.

GTP is bound by residues 12 to 18 and 40 to 42; these read GDEGKGK and GHT. Residue D13 is the Proton acceptor of the active site. The Mg(2+) site is built by D13 and G40. IMP-binding positions include 13 to 16, 38 to 41, T124, R138, Q216, T231, and R297; these read DEGK and NAGH. The active-site Proton donor is the H41. 293–299 is a binding site for substrate; it reads STTGRPR. Residues R299, 325–327, and 403–405 contribute to the GTP site; these read KLD and STG.

Belongs to the adenylosuccinate synthetase family. Homodimer. It depends on Mg(2+) as a cofactor.

It localises to the cytoplasm. The enzyme catalyses IMP + L-aspartate + GTP = N(6)-(1,2-dicarboxyethyl)-AMP + GDP + phosphate + 2 H(+). Its pathway is purine metabolism; AMP biosynthesis via de novo pathway; AMP from IMP: step 1/2. In terms of biological role, plays an important role in the de novo pathway of purine nucleotide biosynthesis. Catalyzes the first committed step in the biosynthesis of AMP from IMP. The polypeptide is Adenylosuccinate synthetase (Hydrogenobaculum sp. (strain Y04AAS1)).